A 211-amino-acid polypeptide reads, in one-letter code: Dephospho-CoA kinase (211 aa).

The DPCK domain occupies 3 to 206 (VLGLTGGIGS…PGMKGPDPHA (204 aa)). 11–16 (GSGKSI) contributes to the ATP binding site.

The protein belongs to the CoaE family.

It localises to the cytoplasm. It catalyses the reaction 3'-dephospho-CoA + ATP = ADP + CoA + H(+). It participates in cofactor biosynthesis; coenzyme A biosynthesis; CoA from (R)-pantothenate: step 5/5. Catalyzes the phosphorylation of the 3'-hydroxyl group of dephosphocoenzyme A to form coenzyme A. The protein is Dephospho-CoA kinase of Syntrophotalea carbinolica (strain DSM 2380 / NBRC 103641 / GraBd1) (Pelobacter carbinolicus).